Consider the following 363-residue polypeptide: Pyrimidine monooxygenase RutA (363 aa).

FMN-binding positions include 49-50, Asn-115, Glu-124, 140-141, and Ser-190; these read IK and RY.

Belongs to the NtaA/SnaA/DszA monooxygenase family. RutA subfamily.

The enzyme catalyses uracil + FMNH2 + NADH + O2 = (Z)-3-ureidoacrylate + FMN + NAD(+) + H2O + H(+). It carries out the reaction thymine + FMNH2 + NADH + O2 = (Z)-2-methylureidoacrylate + FMN + NAD(+) + H2O + H(+). Functionally, catalyzes the pyrimidine ring opening between N-3 and C-4 by an unusual flavin hydroperoxide-catalyzed mechanism, adding oxygen atoms in the process to yield ureidoacrylate peracid, that immediately reacts with FMN forming ureidoacrylate and FMN-N(5)-oxide. The FMN-N(5)-oxide reacts spontaneously with NADH to produce FMN. Requires the flavin reductase RutF to regenerate FMN in vivo. The sequence is that of Pyrimidine monooxygenase RutA from Klebsiella pneumoniae (strain 342).